The sequence spans 837 residues: DNA primase (837 aa).

The CHC2-type zinc-finger motif lies at 782-821; sequence CLRYNHRGSSKSVRVFLILHLKEETKLIVTFMSQCFANKC.

The protein belongs to the herpesviridae DNA primase family. As to quaternary structure, associates with the helicase and the primase-associated factor to form the helicase-primase factor.

Its subcellular location is the host nucleus. Functionally, essential component of the helicase/primase complex. Unwinds the DNA at the replication forks and generates single-stranded DNA for both leading and lagging strand synthesis. The primase initiates primer synthesis and thereby produces large amount of short RNA primers on the lagging strand that the polymerase elongates using dNTPs. The sequence is that of DNA primase (56) from Connochaetes taurinus (Blue wildebeest).